Here is a 251-residue protein sequence, read N- to C-terminus: Probable transcriptional regulatory protein PMI1113 (251 aa).

The protein belongs to the TACO1 family.

The protein resides in the cytoplasm. The protein is Probable transcriptional regulatory protein PMI1113 of Proteus mirabilis (strain HI4320).